Consider the following 282-residue polypeptide: MPADIMEKNSSSPVAATPASVNTTPDKPKTASEHRKSSKPIMEKRRRARINESLSQLKTLILDALKKDSSRHSKLEKADILEMTVKHLRNLQRAQMTAALSTDPSVLGKYRAGFSECMNEVTRFLSTCEGVNTEVRTRLLGHLANCMTQINAMTYPGQAHPALQAPPPPPPSGPAGPQHAPFAPPPPPLVPIPGGAAPPPGSAPCKLGSQAGEAAKVFGGFQVVPAPDGQFAFLIPNGAFAHSGPVIPVYTSNSGTSVGPNAVSPSSGSSLTSDSMWRPWRN.

Residues 1–44 (MPADIMEKNSSSPVAATPASVNTTPDKPKTASEHRKSSKPIMEK) are disordered. A compositionally biased stretch (low complexity) spans 10-21 (SSSPVAATPASV). Basic and acidic residues predominate over residues 26–35 (DKPKTASEHR). Residues 34–91 (HRKSSKPIMEKRRRARINESLSQLKTLILDALKKDSSRHSKLEKADILEMTVKHLRNL) form the bHLH domain. The Orange domain maps to 110–143 (YRAGFSECMNEVTRFLSTCEGVNTEVRTRLLGHL). Disordered stretches follow at residues 158–204 (QAHP…GSAP) and 256–282 (TSVG…PWRN). Pro residues-rich tracts occupy residues 164–174 (QAPPPPPPSGP) and 182–202 (FAPP…PPGS). A compositionally biased stretch (low complexity) spans 264–275 (SPSSGSSLTSDS). Residues 277-280 (WRPW) carry the WRPW motif motif.

In terms of assembly, interacts with SIRT1. Transcription repression requires formation of a complex with a corepressor protein of the Groucho/TLE family. Interacts (via WPRW motif) with TLE1, and more weakly with TLE2. Interacts with HES6. Interacts with an FA complex, composed of FANCA, FANCF, FANCG and FANCL, but not of FANCC, nor FANCE. As to expression, expressed at high levels in undifferentiated neural precursor cells, but the level of expression decreases as neural differentiation proceeds.

Its subcellular location is the nucleus. Functionally, transcriptional repressor of genes that require a bHLH protein for their transcription. May act as a negative regulator of myogenesis by inhibiting the functions of MYOD1 and ASH1. Binds DNA on N-box motifs: 5'-CACNAG-3' with high affinity and on E-box motifs: 5'-CANNTG-3' with low affinity. May play a role in a functional FA core complex response to DNA cross-link damage, being required for the stability and nuclear localization of FA core complex proteins, as well as for FANCD2 monoubiquitination in response to DNA damage. The protein is Transcription factor HES-1 (Hes1) of Mus musculus (Mouse).